A 1425-amino-acid polypeptide reads, in one-letter code: MSDDVNSSATSTSSSTVHFDDTPFEDVYEIETELGSGQFAVVRRVRDRKTGEKYAAKFIKKRRYATSRRGVTRQNIEREVRVLQKIRGNSNVVELHAVYETASDVIIVLELVSGGELFDHVCAKECLDEVEAAAFIKQILLAVRHLHSLHIVHLDIKPENVMLKQRGDSQIKIIDFGLSREIEPGAVVKDMVGTPEFVAPEVVNYEALSPATDMWAVGVVTYILLSGGSPFLGDNRDETFSNITRVRYHFSDRYFKNTSKHAKDFIYRLFVRDVDQRATVEECLQHPWIRGPEGNAIDIRKASCITISHIQSFKTRQRWKRCVELVMVLLKASKSSRRIGDGRFDEEDMVASCTLICAEEGNLRALHKLSALHKLLPNATRKSLKSSFSEPNGATAMHCAAKYGHAEVFNYFHMKGGNICARDDNGDTPLHVACRFAQHTVAGYVANEKIDVDSINKTGETALHCAVESADTRVVRLLLQLRPRLDLPNASGDTVLHLAADSINPRIVPLLVCLAPPLHLRNIREETPLHVAAARGHVDCVQALLDANSPIDAVEQDGKTALIIALENGNVDIASILITNGCDINHADHHGDTALHIASKHGLLQAVQTLCHCAVTVDSVNANKKTALHLAAHYGHVDIIRVLLLARADVTLRGDDGLTAELVAVAAERLEAHSLLKMVKSQEIREEYISQLYPLDTSLRRIKLKLLGHSQSGKTRLVQTLHSSRGISSFLESVTRRISDHYSPSSSMKDDGIHSTNGSFVSESNNNSSFDLAAAAGSKYAPPHSQYTRGIDVQTVNINGCGEFSVWEFGGYEPMHTCYDHFVGNADCIHLILYRTSDPTEVQYKQILYWMNFLKGRVTPFEPIGHCGFSSRRSKVIIVGTHATSSLFPQMNQEGEYVSSDIEAMLNTVRLRFETHFDMDHRLILLDATNPSCIGMKTLKMELAKCRTNILAKLLKPLAILDTVVNHLNLVRKKHANFPVITWPDFIQLVRNEINPLTGDAHCRQIVQQLQLIGELVYLRNDLCDADYVVLNAEWFGTHILGQLLSAEFLSKASPNGSYHTSSLAKIFPEIPEQSDLMTILEVLQLCAPDARTGAHEFPVFIQTEAPDSIWRPYSLKEKERDTVYGGVRILPMRGMERSLHSTFPRIQVALRRSINDYQPAKDTQLHQWSECSKLVSQDREAVIRMVGDAVEIRARGPSESATSMFYFMEDLINLVEHAAAEVGPGISLERHFISPKHLKEHREHPALFPPESMMEMQQRESLSVKGTQDEEELFTDVVCFGSRDVARHLTLGIDVGVADLQMASRCELACLLDPPHAMGRDWSILAVKLQLTDQVPDVDSTGQSLSRTDQLLNEWAIHHPEQASVGNLCRILVELGRCDARDALYRTVPLYVFAPLEDQFLLETNDSGVVSSCHSSSEHNPINI.

The Protein kinase domain maps to 28–289 (YEIETELGSG…VEECLQHPWI (262 aa)). Residues 34-42 (LGSGQFAVV) and K57 contribute to the ATP site. The active-site Proton acceptor is D155. ANK repeat units lie at residues 392-421 (NGAT…NICA), 425-454 (NGDT…DVDS), 458-487 (TGET…RLDL), 491-520 (SGDT…PLHL), 524-553 (REET…PIDA), 557-586 (DGKT…DINH), 590-619 (HGDT…TVDS), 623-652 (NKKT…DVTL), 810-841 (GGYE…DPTE), and 934-963 (IGMK…ILDT). One can recognise a Roc domain in the interval 695 to 950 (LDTSLRRIKL…MELAKCRTNI (256 aa)). The Death domain occupies 1308-1389 (ELACLLDPPH…DARDALYRTV (82 aa)).

It belongs to the protein kinase superfamily. CAMK Ser/Thr protein kinase family. DAP kinase subfamily. In terms of assembly, interacts with ptrn-1. Requires Mg(2+) as cofactor. Expressed in epidermis, muscles and neurons.

The protein resides in the cytoplasm. It localises to the cytosol. Its subcellular location is the cytoskeleton. The enzyme catalyses L-seryl-[protein] + ATP = O-phospho-L-seryl-[protein] + ADP + H(+). The catalysed reaction is L-threonyl-[protein] + ATP = O-phospho-L-threonyl-[protein] + ADP + H(+). Its function is as follows. Negative regulator of epidermal barrier repair and innate immune responses to wounding. The role in epidermal tissue integrity and wound healing is established through the inhibition of epidermal microtubule stability, possibly via the negative regulation of the microtubule minus-end binding protein ptrn-1. In epidermis, prevents expression of specific unc-44 isoforms probably by promoting nuclear localization of pinn-1, which in turn may affect sydn-1-ssup-72-mediated regulation of alternative polyadenylation of unc-44 mRNA. Appears to act downstream of or in parallel to muscarinic signaling in the regulation of autophagy. The sequence is that of Death-associated protein kinase dapk-1 from Caenorhabditis elegans.